A 38-amino-acid polypeptide reads, in one-letter code: Large ribosomal subunit protein bL36 (38 aa).

This sequence belongs to the bacterial ribosomal protein bL36 family.

The protein is Large ribosomal subunit protein bL36 of Buchnera aphidicola subsp. Schizaphis graminum (strain Sg).